Consider the following 632-residue polypeptide: Extracellular metalloproteinase 2 (632 aa).

Residues 1 to 19 form the signal peptide; the sequence is MHGLLLAGLAVALPLGVAG. A propeptide spanning residues 20-244 is cleaved from the precursor; sequence HPARPQTALS…VHNVVDYVAS (225 aa). N270 carries N-linked (GlcNAc...) asparagine glycosylation. Polar residues predominate over residues 294–310; the sequence is NNVAAQDNPSGGSQWEN. The segment at 294-313 is disordered; that stretch reads NNVAAQDNPSGGSQWENNYR. H429 is a Zn(2+) binding site. E430 is an active-site residue. H433 lines the Zn(2+) pocket.

The protein belongs to the peptidase M36 family. Zn(2+) serves as cofactor.

It localises to the secreted. Its function is as follows. Secreted metalloproteinase probably acting as a virulence factor. The sequence is that of Extracellular metalloproteinase 2 (MEP2) from Arthroderma otae (Microsporum canis).